A 101-amino-acid chain; its full sequence is ATP-dependent Clp protease adapter protein ClpS (101 aa).

This sequence belongs to the ClpS family. In terms of assembly, binds to the N-terminal domain of the chaperone ClpA.

Functionally, involved in the modulation of the specificity of the ClpAP-mediated ATP-dependent protein degradation. The sequence is that of ATP-dependent Clp protease adapter protein ClpS from Clostridium acetobutylicum (strain ATCC 824 / DSM 792 / JCM 1419 / IAM 19013 / LMG 5710 / NBRC 13948 / NRRL B-527 / VKM B-1787 / 2291 / W).